A 352-amino-acid chain; its full sequence is Dihydroorotate dehydrogenase (quinone) (352 aa).

Residues 68-72 and T92 each bind FMN; that span reads AGFDK. K72 is a binding site for substrate. 117–121 is a binding site for substrate; sequence NAMGF. FMN contacts are provided by N146 and N179. A substrate-binding site is contributed by N179. S182 functions as the Nucleophile in the catalytic mechanism. N184 lines the substrate pocket. Residues K215 and T243 each coordinate FMN. 244-245 is a binding site for substrate; that stretch reads NT. FMN is bound by residues G263, G292, and 313–314; that span reads YS.

This sequence belongs to the dihydroorotate dehydrogenase family. Type 2 subfamily. In terms of assembly, monomer. It depends on FMN as a cofactor.

Its subcellular location is the cell membrane. It carries out the reaction (S)-dihydroorotate + a quinone = orotate + a quinol. It functions in the pathway pyrimidine metabolism; UMP biosynthesis via de novo pathway; orotate from (S)-dihydroorotate (quinone route): step 1/1. Catalyzes the conversion of dihydroorotate to orotate with quinone as electron acceptor. This Sulfurimonas denitrificans (strain ATCC 33889 / DSM 1251) (Thiomicrospira denitrificans (strain ATCC 33889 / DSM 1251)) protein is Dihydroorotate dehydrogenase (quinone).